Here is a 587-residue protein sequence, read N- to C-terminus: Protein SIX6OS1 (587 aa).

Residues 356 to 378 form a disordered region; sequence TPQKQSNSNQWSEKGDKDAEYGD. Residues 357–367 show a composition bias toward polar residues; that stretch reads PQKQSNSNQWS. Over residues 368–378 the composition is skewed to basic and acidic residues; the sequence is EKGDKDAEYGD. Ser439 carries the phosphoserine modification. The interval 568-587 is disordered; sequence SSSLKGFSSSSQNTTQFTFF.

In terms of assembly, interacts with SYCE1. Interacts with proteasome subunit PSMA8; to participate in meiosis progression during spermatogenesis. Highest expression in retina, skeletal muscle, testis and colon.

It is found in the chromosome. Its function is as follows. Meiotic protein that localizes to the central element of the synaptonemal complex and is required for chromosome synapsis during meiotic recombination. Required for the appropriate processing of intermediate recombination nodules before crossover formation. This Homo sapiens (Human) protein is Protein SIX6OS1.